The chain runs to 98 residues: Dehydrogenase acuH (98 aa).

Its pathway is secondary metabolite biosynthesis. Its function is as follows. Dehydrogenase; part of the gene cluster that mediates the biosynthesis of aculins. The pathway begins with the synthesis of 6-methylsalicylic acid by the polyketide synthase (PKS) acuA via condensation of acetate and malonate units. The 6-methylsalicylic acid decarboxylase acuB then catalyzes the decarboxylation of 6-methylsalicylic acid to yield m-cresol (also known as 3-methylphenol). These first reactions occur in the cytosol. The intermediate m-cresol is then transported into the endoplasmic reticulum where the cytochrome P450 monooxygenase acuC converts it to m-hydroxybenzyl alcohol, which is further converted to gentisyl alcohol by the cytochrome P450 monooxygenase acuD. Gentisyl alcohol is further oxidized by the oxidoreductase acuE that probably catalyzes hydroxylation of the aromatic ring. The aromatic system might then be opened by oxidation through a Baeyer-Villiger type of oxidation, which could be catalyzed by acuF, with the carboxylic acid at C-1 subsequently reduced to an aldehyde by acuG. Subsequently, a hemiacetal is formed, before the dehydrogenase acuH would reduce the double bond between C-4 and C-6. Finally, keto-enol tautomerism results in formation of aculinic acid, which exists as two diastereomers (both R/S configurations at C-1) by non-enzymatic hemiacetal formation. The carboxypeptidase acuI could be involved in the linking of aculinic acid to an aculene A moiety produced by the aculene biosynthesis cluster and which leads to the production of aculin A. AcuI may also be involved in the attachment of proline to aculinic acid to form epi-aculins A and B. The sequence is that of Dehydrogenase acuH from Aspergillus aculeatus (strain ATCC 16872 / CBS 172.66 / WB 5094).